Here is a 278-residue protein sequence, read N- to C-terminus: Potassium/proton antiporter CemA (278 aa).

The next 4 membrane-spanning stretches (helical) occupy residues 61 to 81 (LIVL…FIIG), 155 to 175 (AIKN…LIVL), 203 to 223 (IILF…EVVI), and 238 to 258 (FIFL…KYWI).

The protein belongs to the CemA family.

It is found in the plastid. The protein resides in the chloroplast inner membrane. It carries out the reaction K(+)(in) + H(+)(out) = K(+)(out) + H(+)(in). Functionally, contributes to K(+)/H(+) antiport activity by supporting proton efflux to control proton extrusion and homeostasis in chloroplasts in a light-dependent manner to modulate photosynthesis. Prevents excessive induction of non-photochemical quenching (NPQ) under continuous-light conditions. Indirectly promotes efficient inorganic carbon uptake into chloroplasts. The chain is Potassium/proton antiporter CemA from Cyanidium caldarium (Red alga).